We begin with the raw amino-acid sequence, 819 residues long: MLENSTAVHGVRLSDSPEDPFLRKRLASNTQLNQKKIRFTENENDLSPERAQKEPVSIPHGRYTWSTSPDTDSSHLPSTPPTVDIPFHHPHTIHSPTFTLSVSPDSQSSSATHQNDYISSPHADFSFSPPASKIQSHEPLNDMAAVHPLRPSHVSGPLSPPEPKAASVDHSINPAYNASFRLPDGPLWTEGSENLPSLDIQLQLAHIYFIYAHGQPYVLFHRDSFMEALKSQRLPPVLVLAMCAVAIRFWQTDKYDKNELFEQWFNRASAIAMANFDKLDLVYVASFVMLSYVCAATSKYWMFAGMAIRMVVALHPNKTPNLPYYDRPDSPLPFEIRVQLTRRLFWDCFMLDRLNSLYCNTQFLNLEDIHVPLPMRETLFMYKAHAVTETLTGKPSSPDSFTNANPTTAPIVSRNAQDNMGMLAYMIRMVSIWGRVVRCLKSYSQKQSNPYPFWHAKSTFKQLDQELYEWEKNLPNRLRYSRQTLLSYHMMGQGGQFACLHLIFLQIHLYVHRYAASISSVPFSHVKSPPTVFENQSAVLASQCANAICRIIQDCTELSISLAAPFTASSAYLAGTVLLYHYITRGSEVQASKAAVHLPIAKRHLAQLSVYWPALGMYAKALDAIAFHQGALVTPSVPPVIATVSKTNTTNTGVQQRGNVGVTTTGSILTQSSPALPVQPVPLAYSKPAPTTKSSLTELAYNTNVSLPPRSPGTGSLAAGNLPNEKAPSLMTMVNGGPVPGDIGEASIPVVQNLQPSTAHVDPESDLGRVIKICDWYQSPSSDVLLSKPLQLNSSEEMEQQCIDLSRHNTLLNLSSYGI.

S16 bears the Phosphoserine mark. Disordered stretches follow at residues 28 to 83 (SNTQ…PPTV) and 96 to 134 (PTFTLSVSPDSQSSSATHQNDYISSPHADFSFSPPASKI). Residues 36–63 (KIRFTENENDLSPERAQKEPVSIPHGRY) constitute a DNA-binding region (zn(2)-C6 fungal-type). 2 stretches are compositionally biased toward polar residues: residues 64–77 (TWSTSPDTDSSHLP) and 96–118 (PTFTLSVSPDSQSSSATHQNDYI).

The protein resides in the nucleus. This is an uncharacterized protein from Schizosaccharomyces pombe (strain 972 / ATCC 24843) (Fission yeast).